The primary structure comprises 534 residues: Lysophosphatidylcholine acyltransferase 1 (534 aa).

Residues 1–22 (MRLRGCGPRAAPASSAGASDAR) form a disordered region. The Cytoplasmic portion of the chain corresponds to 1–57 (MRLRGCGPRAAPASSAGASDARLLAPPGRNPFVHELRLSALQKAQVALMTLTLFPVR). A compositionally biased stretch (low complexity) spans 7-22 (GPRAAPASSAGASDAR). The chain crosses the membrane as a helical; Signal-anchor for type II membrane protein span at residues 58 to 78 (LLVAAAMMLLAWPLALVASLG). The Lumenal portion of the chain corresponds to 79-534 (SAEKEPEQPP…GRKPVRKKLD (456 aa)). Residues 135 to 140 (HSSYFD) carry the HXXXXD motif motif. EF-hand domains lie at 379–414 (PVSD…VCRP) and 451–486 (VAEL…YPAF). Aspartate 392, serine 394, serine 396, glutamate 398, and glutamate 403 together coordinate Ca(2+). The disordered stretch occupies residues 512-534 (GFCADFSPENSDAGRKPVRKKLD). Over residues 523–534 (DAGRKPVRKKLD) the composition is skewed to basic and acidic residues. A Di-lysine motif motif is present at residues 531-534 (KKLD).

This sequence belongs to the 1-acyl-sn-glycerol-3-phosphate acyltransferase family. In terms of tissue distribution, erythrocytes.

The protein localises to the endoplasmic reticulum membrane. It is found in the golgi apparatus membrane. It localises to the cell membrane. Its subcellular location is the lipid droplet. The enzyme catalyses a 1-acyl-sn-glycero-3-phosphocholine + an acyl-CoA = a 1,2-diacyl-sn-glycero-3-phosphocholine + CoA. The catalysed reaction is a 1-acyl-sn-glycero-3-phosphate + an acyl-CoA = a 1,2-diacyl-sn-glycero-3-phosphate + CoA. It carries out the reaction a 1-O-alkyl-sn-glycero-3-phosphocholine + acetyl-CoA = a 1-O-alkyl-2-acetyl-sn-glycero-3-phosphocholine + CoA. It catalyses the reaction a 1-O-(1Z-alkenyl)-sn-glycero-3-phosphocholine + an acyl-CoA = a 1-O-(1Z-alkenyl)-2-acyl-sn-glycero-3-phosphocholine + CoA. The enzyme catalyses 1-acyl-sn-glycero-3-phospho-(1'-sn-glycerol) + an acyl-CoA = a 1,2-diacyl-sn-glycero-3-phospho-(1'-sn-glycerol) + CoA. The catalysed reaction is 1-hexadecanoyl-sn-glycero-3-phosphocholine + (9Z)-octadecenoyl-CoA = 1-hexadecanoyl-2-(9Z-octadecenoyl)-sn-glycero-3-phosphocholine + CoA. It carries out the reaction 1-hexadecanoyl-sn-glycero-3-phosphocholine + hexadecanoyl-CoA = 1,2-dihexadecanoyl-sn-glycero-3-phosphocholine + CoA. It catalyses the reaction 1-O-hexadecyl-sn-glycero-3-phosphocholine + hexadecanoyl-CoA = 1-O-hexadecyl-2-hexadecanoyl-sn-glycero-3-phosphocholine + CoA. The enzyme catalyses a 1-O-(1Z-alkenyl)-sn-glycero-3-phosphocholine + hexadecanoyl-CoA = 1-O-(1Z)-alkenyl-2-hexadecanoyl-sn-glycero-3-phosphocholine + CoA. The catalysed reaction is 1-hexadecanoyl-sn-glycero-3-phospho-(1'-sn-glycerol) + hexadecanoyl-CoA = 1,2-dihexadecanoyl-sn-glycero-3-phospho-(1'-sn-glycerol) + CoA. It carries out the reaction 1-dodecanoyl-sn-glycero-3-phosphocholine + hexadecanoyl-CoA = 1-dodecanoyl-2-hexadecanoyl-sn-glycero-3-phosphocholine + CoA. It catalyses the reaction 1-tetradecanoyl-sn-glycero-3-phosphocholine + hexadecanoyl-CoA = 1-tetradecanoyl-2-hexadecanoyl-sn-glycero-3-phosphocholine + CoA. The enzyme catalyses 1-O-octadecyl-sn-glycero-3-phosphocholine + hexadecanoyl-CoA = 1-O-octadecyl-2-hexadecanoyl-sn-glycero-3-phosphocholine + CoA. The catalysed reaction is 1-octadecanoyl-sn-glycero-3-phosphocholine + hexadecanoyl-CoA = 1-octadecanoyl-2-hexadecanoyl-sn-glycero-3-phosphocholine + CoA. It carries out the reaction 1-(9Z-octadecenoyl)-sn-glycero-3-phosphocholine + hexadecanoyl-CoA = 1-(9Z-octadecenoyl)-2-hexadecanoyl-sn-glycero-3-phosphocholine + CoA. It catalyses the reaction 1-eicosanoyl-sn-glycero-3-phosphocholine + hexadecanoyl-CoA = 1-eicosanoyl-2-hexadecanoyl-sn-glycero-3-phosphocholine + CoA. The enzyme catalyses hexanoyl-CoA + 1-hexadecanoyl-sn-glycero-3-phosphocholine = 1-hexadecanoyl-2-hexanoyl-sn-glycero-3-phosphocholine + CoA. The catalysed reaction is octanoyl-CoA + 1-hexadecanoyl-sn-glycero-3-phosphocholine = 1-hexadecanoyl-2-octanoyl-sn-glycero-3-phosphocholine + CoA. It carries out the reaction decanoyl-CoA + 1-hexadecanoyl-sn-glycero-3-phosphocholine = 1-hexadecanoyl-2-decanoyl-sn-glycero-3-phosphocholine + CoA. It catalyses the reaction dodecanoyl-CoA + 1-hexadecanoyl-sn-glycero-3-phosphocholine = 1-hexadecanoyl-2-dodecanoyl-sn-glycero-3-phosphocholine + CoA. The enzyme catalyses tetradecanoyl-CoA + 1-hexadecanoyl-sn-glycero-3-phosphocholine = 1-hexadecanoyl-2-tetradecanoyl-sn-glycero-3-phosphocholine + CoA. The catalysed reaction is (9Z,12Z)-octadecadienoyl-CoA + 1-hexadecanoyl-sn-glycero-3-phosphocholine = 1-hexadecanoyl-2-(9Z,12Z-octadecadienoyl)-sn-glycero-3-phosphocholine + CoA. It carries out the reaction (4Z,7Z,10Z,13Z,16Z,19Z)-docosahexaenoyl-CoA + 1-hexadecanoyl-sn-glycero-3-phosphocholine = 1-hexadecanoyl-2-(4Z,7Z,10Z,13Z,16Z,19Z-docosahexaenoyl)-sn-glycero-3-phosphocholine + CoA. It catalyses the reaction 1-hexadecanoyl-sn-glycero-3-phosphocholine + acetyl-CoA = 1-hexadecanoyl-2-acetyl-sn-glycero-3-phosphocholine + CoA. The enzyme catalyses eicosanoyl-CoA + 1-hexadecanoyl-sn-glycero-3-phosphocholine = 1-hexadecanoyl-2-eicosanoyl-sn-glycero-3-phosphocholine + CoA. The catalysed reaction is 1-O-hexadecyl-sn-glycero-3-phosphocholine + acetyl-CoA = 1-O-hexadecyl-2-acetyl-sn-glycero-3-phosphocholine + CoA. It carries out the reaction a 1-acyl-sn-glycero-3-phosphocholine + hexadecanoyl-CoA = 1-acyl-2-hexadecanoyl-sn-glycero-3-phosphocholine + CoA. It catalyses the reaction a 1-acyl-sn-glycero-3-phosphate + hexadecanoyl-CoA = 1-acyl-2-hexadecanoyl-sn-glycero-3-phosphate + CoA. The enzyme catalyses 1-acyl-sn-glycero-3-phospho-(1'-sn-glycerol) + hexadecanoyl-CoA = 1-acyl-2-hexadecanoyl-sn-glycero-3-phospho-(1'-sn-glycerol) + CoA. The protein operates within lipid metabolism; phospholipid metabolism. In terms of biological role, exhibits acyltransferase activity. Exhibits acetyltransferase activity. Activity is calcium-independent. Catalyzes the conversion of lysophosphatidylcholine (1-acyl-sn-glycero-3-phosphocholine or LPC) into phosphatidylcholine (1,2-diacyl-sn-glycero-3-phosphocholine or PC). Catalyzes the conversion 1-acyl-sn-glycerol-3-phosphate (lysophosphatidic acid or LPA) into 1,2-diacyl-sn-glycerol-3-phosphate (phosphatidic acid or PA) by incorporating an acyl moiety at the sn-2 position of the glycerol backbone. Displays a clear preference for saturated fatty acyl-CoAs, and 1-myristoyl or 1-palmitoyl LPC as acyl donors and acceptors, respectively. Involved in platelet-activating factor (PAF) biosynthesis by catalyzing the conversion of the PAF precursor, 1-O-alkyl-sn-glycero-3-phosphocholine (lyso-PAF) into 1-O-alkyl-2-acetyl-sn-glycero-3-phosphocholine (PAF). May synthesize phosphatidylcholine in pulmonary surfactant, thereby playing a pivotal role in respiratory physiology. Involved in the regulation of lipid droplet number and size. The protein is Lysophosphatidylcholine acyltransferase 1 (LPCAT1) of Homo sapiens (Human).